The chain runs to 255 residues: Spectinomycin 9-adenylyltransferase (255 aa).

It catalyses the reaction spectinomycin + ATP = 9-O-adenylylspectinomycin + diphosphate. Its function is as follows. Mediates bacterial resistance to the antibiotic spectinomycin but not streptomycin. This is Spectinomycin 9-adenylyltransferase from Enterococcus faecalis (Streptococcus faecalis).